The sequence spans 215 residues: 3-isopropylmalate dehydratase small subunit (215 aa).

The protein belongs to the LeuD family. LeuD type 1 subfamily. Heterodimer of LeuC and LeuD.

It carries out the reaction (2R,3S)-3-isopropylmalate = (2S)-2-isopropylmalate. The protein operates within amino-acid biosynthesis; L-leucine biosynthesis; L-leucine from 3-methyl-2-oxobutanoate: step 2/4. Its function is as follows. Catalyzes the isomerization between 2-isopropylmalate and 3-isopropylmalate, via the formation of 2-isopropylmaleate. The sequence is that of 3-isopropylmalate dehydratase small subunit from Cellvibrio japonicus (strain Ueda107) (Pseudomonas fluorescens subsp. cellulosa).